We begin with the raw amino-acid sequence, 250 residues long: Non-specific acid phosphatase (250 aa).

An N-terminal signal peptide occupies residues 1–20 (MKSRYLVFFLPLIVAKYTSA).

The protein belongs to the class A bacterial acid phosphatase family. As to quaternary structure, homodimer.

It is found in the periplasm. It catalyses the reaction a phosphate monoester + H2O = an alcohol + phosphate. The protein is Non-specific acid phosphatase (phoN) of Salmonella typhimurium (strain LT2 / SGSC1412 / ATCC 700720).